Consider the following 196-residue polypeptide: Pyridoxal 5'-phosphate synthase subunit PdxT (196 aa).

46–48 (GES) is an L-glutamine binding site. The active-site Nucleophile is the cysteine 78. Residues arginine 105 and 133-134 (IR) contribute to the L-glutamine site. Residues histidine 169 and glutamate 171 each act as charge relay system in the active site.

It belongs to the glutaminase PdxT/SNO family. As to quaternary structure, in the presence of PdxS, forms a dodecamer of heterodimers. Only shows activity in the heterodimer.

It carries out the reaction aldehydo-D-ribose 5-phosphate + D-glyceraldehyde 3-phosphate + L-glutamine = pyridoxal 5'-phosphate + L-glutamate + phosphate + 3 H2O + H(+). The enzyme catalyses L-glutamine + H2O = L-glutamate + NH4(+). It participates in cofactor biosynthesis; pyridoxal 5'-phosphate biosynthesis. Catalyzes the hydrolysis of glutamine to glutamate and ammonia as part of the biosynthesis of pyridoxal 5'-phosphate. The resulting ammonia molecule is channeled to the active site of PdxS. In Geobacillus stearothermophilus (Bacillus stearothermophilus), this protein is Pyridoxal 5'-phosphate synthase subunit PdxT.